The chain runs to 675 residues: DNA ligase (675 aa).

NAD(+) is bound by residues 32–36 (DAEYD), 81–82 (SL), and Glu113. Lys115 serves as the catalytic N6-AMP-lysine intermediate. Positions 136, 173, 291, and 315 each coordinate NAD(+). The Zn(2+) site is built by Cys409, Cys412, Cys427, and Cys433. One can recognise a BRCT domain in the interval 595-675 (SEKTYFFNKK…ELNSLIRIKE (81 aa)).

The protein belongs to the NAD-dependent DNA ligase family. LigA subfamily. The cofactor is Mg(2+). Mn(2+) is required as a cofactor.

The enzyme catalyses NAD(+) + (deoxyribonucleotide)n-3'-hydroxyl + 5'-phospho-(deoxyribonucleotide)m = (deoxyribonucleotide)n+m + AMP + beta-nicotinamide D-nucleotide.. Its function is as follows. DNA ligase that catalyzes the formation of phosphodiester linkages between 5'-phosphoryl and 3'-hydroxyl groups in double-stranded DNA using NAD as a coenzyme and as the energy source for the reaction. It is essential for DNA replication and repair of damaged DNA. The protein is DNA ligase of Buchnera aphidicola subsp. Acyrthosiphon pisum (strain 5A).